We begin with the raw amino-acid sequence, 113 residues long: uncharacterized protein (113 aa).

Residues 41–88 (DWHHHPDSDELFIVLEGELLIDFKDKETAVLKANDSLLIPKGTVHRTR) form the Cupin type-2 domain.

This sequence belongs to the SchB/CurC family.

This is an uncharacterized protein from Bacillus subtilis (strain 168).